The sequence spans 67 residues: uncharacterized protein (67 aa).

The next 2 helical transmembrane spans lie at 10-32 (NLSH…TAFI) and 44-66 (ATLT…MGQW).

It localises to the cell membrane. This is an uncharacterized protein from Archaeoglobus fulgidus (strain ATCC 49558 / DSM 4304 / JCM 9628 / NBRC 100126 / VC-16).